We begin with the raw amino-acid sequence, 955 residues long: Reversion-inducing cysteine-rich protein with Kazal motifs (955 aa).

Residues 1-22 form the signal peptide; the sequence is MSGCLQILTVLLCCRFWALVFS. A Knot 1 repeat occupies 28–75; the sequence is CVHHAADIPRCRDACEQLASIRSESRLRHLLHRLPSYCPETLSELWIC. Residues 28–326 are 5 X Knot repeats; the sequence is CVHHAADIPR…NPVEMDLITC (299 aa). A glycan (N-linked (GlcNAc...) asparagine) is linked at asparagine 77. 2 Knot repeats span residues 95-132 and 142-188; these read CCEL…LYSC and CCSY…LILC. The N-linked (GlcNAc...) asparagine glycan is linked to asparagine 191. Knot repeat units lie at residues 207-254 and 282-326; these read CCDR…LWQC and CCFK…LITC. N-linked (GlcNAc...) asparagine glycans are attached at residues asparagine 287 and asparagine 375. Kazal-like domains follow at residues 615–661, 686–741, and 742–778; these read LFTG…SCRS, DLSE…HCQD, and ACRR…RCHA. Intrachain disulfides connect cysteine 621-cysteine 646, cysteine 623-cysteine 642, cysteine 631-cysteine 659, cysteine 704-cysteine 724, and cysteine 713-cysteine 739. A lipid anchor (GPI-anchor amidated serine) is attached at serine 931. The propeptide occupies 932 to 955; sequence SCVSISVCVLLLLCSLILTLTSDL.

The protein belongs to the RECK family. Interacts (via knot repeats) with wnt7a (via disordered linker region); the interaction is direct. Interacts (via knot repeats) with wnt7b (via disordered linker region); the interaction is direct. Interacts with adgra2; the interaction is direct. As to expression, expressed in the cerebral endothelium.

It is found in the cell membrane. Functions together with adgra2 to enable brain endothelial cells to selectively respond to Wnt7 signals (wnt7a or wnt7b). Plays a key role in Wnt7-specific responses: required for central nervous system (CNS) angiogenesis and blood-brain barrier regulation. Acts as a Wnt7-specific coactivator of canonical Wnt signaling by decoding Wnt ligands: acts by interacting specifically with the disordered linker region of Wnt7, thereby conferring ligand selectivity for Wnt7. Adgra2 is then required to deliver reck-bound Wnt7 to frizzled by assembling a higher-order RECK-ADGRA2-Fzd-LRP5-LRP6 complex. Also acts as a serine protease inhibitor. The polypeptide is Reversion-inducing cysteine-rich protein with Kazal motifs (Danio rerio (Zebrafish)).